Consider the following 138-residue polypeptide: Small ribosomal subunit protein bS6 (138 aa).

Residues 94–138 (VKQDGPLPTPKPTSKENEPEKEEVKPTEEKTESPSKDEKKEDSKE) are disordered. The span at 106 to 138 (TSKENEPEKEEVKPTEEKTESPSKDEKKEDSKE) shows a compositional bias: basic and acidic residues.

This sequence belongs to the bacterial ribosomal protein bS6 family.

Functionally, binds together with bS18 to 16S ribosomal RNA. This Prochlorococcus marinus (strain NATL2A) protein is Small ribosomal subunit protein bS6.